Consider the following 179-residue polypeptide: Putative mediator of RNA polymerase II transcription subunit 28 (179 aa).

The stretch at 81-119 (SAEKNKIQLKQEIYKVKKEIENKDRLIERYKNKVKEWKY) forms a coiled coil.

The protein belongs to the Mediator complex subunit 28 family. As to quaternary structure, component of the Mediator complex.

The protein resides in the nucleus. Component of the Mediator complex, a coactivator involved in the regulated transcription of nearly all RNA polymerase II-dependent genes. Mediator functions as a bridge to convey information from gene-specific regulatory proteins to the basal RNA polymerase II transcription machinery. Mediator is recruited to promoters by direct interactions with regulatory proteins and serves as a scaffold for the assembly of a functional preinitiation complex with RNA polymerase II and the general transcription factors. In Dictyostelium discoideum (Social amoeba), this protein is Putative mediator of RNA polymerase II transcription subunit 28 (med28).